The sequence spans 70 residues: Pyruvate-flavodoxin oxidoreductase (70 aa).

It belongs to the pyruvate:ferredoxin/flavodoxin oxidoreductase family.

The catalysed reaction is oxidized [flavodoxin] + pyruvate + CoA + 2 H(+) = reduced [flavodoxin] + acetyl-CoA + CO2. Its function is as follows. Oxidoreductase required for the transfer of electrons from pyruvate to flavodoxin, which reduces nitrogenase. This chain is Pyruvate-flavodoxin oxidoreductase (nifJ), found in Anabaena variabilis.